Here is a 494-residue protein sequence, read N- to C-terminus: Glycerol kinase (494 aa).

Thr13 contributes to the ADP binding site. ATP-binding residues include Thr13, Thr14, and Ser15. Residue Thr13 participates in sn-glycerol 3-phosphate binding. Arg17 serves as a coordination point for ADP. Residues Arg83, Glu84, Tyr135, and Asp244 each coordinate sn-glycerol 3-phosphate. Residues Arg83, Glu84, Tyr135, Asp244, and Gln245 each contribute to the glycerol site. Positions 266 and 309 each coordinate ADP. The ATP site is built by Thr266, Gly309, Gln313, and Gly410. Gly410 and Asn414 together coordinate ADP.

The protein belongs to the FGGY kinase family.

It carries out the reaction glycerol + ATP = sn-glycerol 3-phosphate + ADP + H(+). It participates in polyol metabolism; glycerol degradation via glycerol kinase pathway; sn-glycerol 3-phosphate from glycerol: step 1/1. Inhibited by fructose 1,6-bisphosphate (FBP). Key enzyme in the regulation of glycerol uptake and metabolism. Catalyzes the phosphorylation of glycerol to yield sn-glycerol 3-phosphate. This is Glycerol kinase from Shewanella sp. (strain ANA-3).